Reading from the N-terminus, the 101-residue chain is Urease subunit beta (101 aa).

It belongs to the urease beta subunit family. As to quaternary structure, heterotrimer of UreA (gamma), UreB (beta) and UreC (alpha) subunits. Three heterotrimers associate to form the active enzyme.

The protein resides in the cytoplasm. It carries out the reaction urea + 2 H2O + H(+) = hydrogencarbonate + 2 NH4(+). It functions in the pathway nitrogen metabolism; urea degradation; CO(2) and NH(3) from urea (urease route): step 1/1. The protein is Urease subunit beta of Rhizobium meliloti (strain 1021) (Ensifer meliloti).